The sequence spans 134 residues: Small ribosomal subunit protein uS9c (134 aa).

Positions Asp-105 to Ala-114 are enriched in basic and acidic residues. The segment at Asp-105–Arg-134 is disordered. Over residues Lys-115 to Arg-134 the composition is skewed to basic residues.

Belongs to the universal ribosomal protein uS9 family.

Its subcellular location is the plastid. It localises to the cyanelle. The chain is Small ribosomal subunit protein uS9c (rps9) from Cyanophora paradoxa.